A 487-amino-acid chain; its full sequence is Betaine aldehyde dehydrogenase (487 aa).

The K(+) site is built by Ser-26 and Asp-93. NAD(+) is bound at residue 150-152 (GAW). Catalysis depends on Lys-162, which acts as the Charge relay system. NAD(+) is bound by residues 176–179 (KPSE) and 229–232 (SVPT). Residue Leu-244 participates in K(+) binding. Residue Glu-250 is the Proton acceptor of the active site. Residues Gly-252, Cys-284, and Glu-384 each contribute to the NAD(+) site. The Nucleophile role is filled by Cys-284. At Cys-284 the chain carries Cysteine sulfenic acid (-SOH). The K(+) site is built by Lys-454 and Gly-457. Glu-461 (charge relay system) is an active-site residue.

Belongs to the aldehyde dehydrogenase family. As to quaternary structure, dimer of dimers. The cofactor is K(+).

The enzyme catalyses betaine aldehyde + NAD(+) + H2O = glycine betaine + NADH + 2 H(+). Its pathway is amine and polyamine biosynthesis; betaine biosynthesis via choline pathway; betaine from betaine aldehyde: step 1/1. Functionally, involved in the biosynthesis of the osmoprotectant glycine betaine. Catalyzes the irreversible oxidation of betaine aldehyde to the corresponding acid. The protein is Betaine aldehyde dehydrogenase of Rhizobium johnstonii (strain DSM 114642 / LMG 32736 / 3841) (Rhizobium leguminosarum bv. viciae).